The sequence spans 98 residues: NADH-ubiquinone oxidoreductase chain 4L (98 aa).

The next 3 helical transmembrane spans lie at 1–21 (MSMV…GLLI), 30–50 (LLCL…TILI), and 61–81 (IILL…LVMI).

It belongs to the complex I subunit 4L family. As to quaternary structure, core subunit of respiratory chain NADH dehydrogenase (Complex I) which is composed of 45 different subunits.

The protein localises to the mitochondrion inner membrane. The enzyme catalyses a ubiquinone + NADH + 5 H(+)(in) = a ubiquinol + NAD(+) + 4 H(+)(out). In terms of biological role, core subunit of the mitochondrial membrane respiratory chain NADH dehydrogenase (Complex I) which catalyzes electron transfer from NADH through the respiratory chain, using ubiquinone as an electron acceptor. Part of the enzyme membrane arm which is embedded in the lipid bilayer and involved in proton translocation. The polypeptide is NADH-ubiquinone oxidoreductase chain 4L (MT-ND4L) (Neovison vison (American mink)).